A 69-amino-acid chain; its full sequence is Putative membrane protein insertion efficiency factor (69 aa).

The protein belongs to the UPF0161 family.

Its subcellular location is the cell inner membrane. Could be involved in insertion of integral membrane proteins into the membrane. The protein is Putative membrane protein insertion efficiency factor of Nitrosomonas europaea (strain ATCC 19718 / CIP 103999 / KCTC 2705 / NBRC 14298).